The following is a 459-amino-acid chain: Alpha,alpha-trehalose-phosphate synthase [UDP-forming] (459 aa).

D-glucose 6-phosphate is bound by residues Tyr86 and Asp140. Positions 262 and 267 each coordinate UDP. Arg262 and Lys267 together coordinate UDP-alpha-D-glucose. A D-glucose 6-phosphate-binding site is contributed by Arg300. 361–369 (DGMNLVALE) contributes to the UDP-alpha-D-glucose binding site. 365–369 (LVALE) provides a ligand contact to UDP.

This sequence belongs to the glycosyltransferase 20 family. In terms of assembly, component of the trehalose synthase complex.

It localises to the cytoplasm. It catalyses the reaction D-glucose 6-phosphate + UDP-alpha-D-glucose = alpha,alpha-trehalose 6-phosphate + UDP + H(+). Synthase catalytic subunit of the trehalose synthase complex that catalyzes the production of trehalose from glucose-6-phosphate and UDP-alpha-D-glucose in a two step process. Can function independently of the complex. This Encephalitozoon cuniculi (strain GB-M1) (Microsporidian parasite) protein is Alpha,alpha-trehalose-phosphate synthase [UDP-forming] (TPS1).